Here is a 418-residue protein sequence, read N- to C-terminus: Lysophosphatidic acid phosphatase type 6 (418 aa).

The transit peptide at 1–25 (MRVWVPVGVLTSLAYCFHQRRVALA) directs the protein to the mitochondrion. Residues 51–161 (RHGARSPLKP…VFIRSTNMFR (111 aa)) are substrate binding. The active-site Nucleophile is His52. The active-site Proton donor is the Asp327.

Belongs to the histidine acid phosphatase family. Monomer.

It localises to the mitochondrion. The enzyme catalyses a phosphate monoester + H2O = an alcohol + phosphate. It catalyses the reaction 1-(9Z-octadecenoyl)-sn-glycero-3-phosphate + H2O = 1-(9Z-octadecenoyl)-sn-glycerol + phosphate. Functionally, hydrolyzes lysophosphatidic acid (LPA) containing a medium length fatty acid chain to the corresponding monoacylglycerol. Has highest activity with lysophosphatidic acid containing myristate (C14:0), monounsaturated oleate (C18:1) or palmitate (C16:0), and lower activity with C18:0 and C6:0 lysophosphatidic acid. In Mus musculus (Mouse), this protein is Lysophosphatidic acid phosphatase type 6 (Acp6).